Here is a 238-residue protein sequence, read N- to C-terminus: 1-(5-phosphoribosyl)-5-[(5-phosphoribosylamino)methylideneamino] imidazole-4-carboxamide isomerase (238 aa).

The active-site Proton acceptor is the Asp-8. The active-site Proton donor is the Asp-129.

This sequence belongs to the HisA/HisF family.

It localises to the cytoplasm. It carries out the reaction 1-(5-phospho-beta-D-ribosyl)-5-[(5-phospho-beta-D-ribosylamino)methylideneamino]imidazole-4-carboxamide = 5-[(5-phospho-1-deoxy-D-ribulos-1-ylimino)methylamino]-1-(5-phospho-beta-D-ribosyl)imidazole-4-carboxamide. The protein operates within amino-acid biosynthesis; L-histidine biosynthesis; L-histidine from 5-phospho-alpha-D-ribose 1-diphosphate: step 4/9. This chain is 1-(5-phosphoribosyl)-5-[(5-phosphoribosylamino)methylideneamino] imidazole-4-carboxamide isomerase, found in Lacticaseibacillus casei (strain BL23) (Lactobacillus casei).